Reading from the N-terminus, the 160-residue chain is Cytochrome b6-f complex subunit 4 (160 aa).

3 helical membrane-spanning segments follow: residues 36 to 56, 96 to 116, and 131 to 151; these read IFYM…GLAV, LGVL…FIKI, and TVFL…ALPI.

It belongs to the cytochrome b family. PetD subfamily. In terms of assembly, the 4 large subunits of the cytochrome b6-f complex are cytochrome b6, subunit IV (17 kDa polypeptide, petD), cytochrome f and the Rieske protein, while the 4 small subunits are petG, petL, petM and petN. The complex functions as a dimer.

The protein resides in the plastid. It is found in the chloroplast thylakoid membrane. In terms of biological role, component of the cytochrome b6-f complex, which mediates electron transfer between photosystem II (PSII) and photosystem I (PSI), cyclic electron flow around PSI, and state transitions. The polypeptide is Cytochrome b6-f complex subunit 4 (Auxenochlorella protothecoides (Green microalga)).